The primary structure comprises 353 residues: Tetraacyldisaccharide 4'-kinase (353 aa).

66-73 (TVGGTGKT) provides a ligand contact to ATP.

The protein belongs to the LpxK family.

It catalyses the reaction a lipid A disaccharide + ATP = a lipid IVA + ADP + H(+). Its pathway is glycolipid biosynthesis; lipid IV(A) biosynthesis; lipid IV(A) from (3R)-3-hydroxytetradecanoyl-[acyl-carrier-protein] and UDP-N-acetyl-alpha-D-glucosamine: step 6/6. Transfers the gamma-phosphate of ATP to the 4'-position of a tetraacyldisaccharide 1-phosphate intermediate (termed DS-1-P) to form tetraacyldisaccharide 1,4'-bis-phosphate (lipid IVA). In Geobacter sulfurreducens (strain ATCC 51573 / DSM 12127 / PCA), this protein is Tetraacyldisaccharide 4'-kinase.